Reading from the N-terminus, the 431-residue chain is Indole diterpene prenyltransferase nodD1 (431 aa).

Residue 85 to 86 coordinates L-tryptophan; it reads FI. Substrate-binding residues include R107, K194, R268, K270, Y272, and Y353.

The protein belongs to the tryptophan dimethylallyltransferase family.

It participates in secondary metabolite biosynthesis. Its function is as follows. Indole diterpene prenyltransferase; part of the gene cluster that mediates the biosynthesis of the indole diterpenes nodulisporic acids (NA). Nodulisporic acid A (NAA) and its chemically modified derivatives are of particular significance because of their highly potent insecticidal activity against blood-feeding arthropods and lack of observable adverse effects on mammals, in particular the tremogenicity associated with the paspaline-derived IDTs is not observed. The geranylgeranyl diphosphate (GGPP) synthase ggs1, localized outside of the cluster, is proposed to catalyze the first step in nodulisporic acid biosynthesis via conversion of farnesyl pyrophosphate and isopentyl pyrophosphate into geranylgeranyl pyrophosphate (GGPP). Condensation of indole-3-glycerol phosphate with GGPP by the prenyl transferase nodC then forms 3-geranylgeranylindole (3-GGI). Epoxidation by the FAD-dependent monooxygenase nodM leads to a single-epoxidized-GGI that is substrate of the terpene cyclase nodB for cyclization to yield emindole SB. The terminal methyl carbon, C28, of emindole SB is then oxidized by the cytochrome P450 monooxygenase nodW to produce nodulisporic acid F (NAF), the pentacyclic core of NAA. NAF is converted to nodulisporic acid E (NAE) via prenylation. This step is probably performed by one of the indole diterpene prenyltransferases nodD1 or nodD2. Several oxidation steps performed by the FAD-linked oxidoreductase nodO and one of the cytochrome P450 monooxygenase nodR, nodX or nodZ further convert NAE to nodulisporic acid D (NAD). NAD is substrate of cytochrome P450 monooxygenase nodJ to produce the precursor of nodulisporic acid C (NAC), converted to NAC by one of the indole diterpene prenyltransferases nodD1 or nodD2. The FAD-dependent monooxygenase nodY2 then oxidizes NAC to nodulisporic acid B (NAB). Finally NAB is converted to NAA by one of the cytochrome P450 monooxygenases nodR, nodX or nodZ. The protein is Indole diterpene prenyltransferase nodD1 of Hypoxylon pulicicidum.